A 539-amino-acid polypeptide reads, in one-letter code: Chaperonin GroEL 1 (539 aa).

ATP is bound by residues 29-32, 86-90, glycine 413, and aspartate 493; these read TLGP and DGTTT.

This sequence belongs to the chaperonin (HSP60) family. As to quaternary structure, forms a cylinder of 14 subunits composed of two heptameric rings stacked back-to-back. Interacts with the co-chaperonin GroES.

It is found in the cytoplasm. The catalysed reaction is ATP + H2O + a folded polypeptide = ADP + phosphate + an unfolded polypeptide.. Its function is as follows. Together with its co-chaperonin GroES, plays an essential role in assisting protein folding. The GroEL-GroES system forms a nano-cage that allows encapsulation of the non-native substrate proteins and provides a physical environment optimized to promote and accelerate protein folding. This chain is Chaperonin GroEL 1, found in Acidothermus cellulolyticus (strain ATCC 43068 / DSM 8971 / 11B).